Reading from the N-terminus, the 510-residue chain is 2,3-bisphosphoglycerate-independent phosphoglycerate mutase (510 aa).

Aspartate 16 and serine 66 together coordinate Mn(2+). The active-site Phosphoserine intermediate is serine 66. Substrate is bound by residues histidine 127, 156 to 157, arginine 186, arginine 192, 257 to 260, and lysine 333; these read RD and RADR. Aspartate 400, histidine 404, aspartate 441, histidine 442, and histidine 460 together coordinate Mn(2+).

Belongs to the BPG-independent phosphoglycerate mutase family. In terms of assembly, monomer. It depends on Mn(2+) as a cofactor.

It carries out the reaction (2R)-2-phosphoglycerate = (2R)-3-phosphoglycerate. It functions in the pathway carbohydrate degradation; glycolysis; pyruvate from D-glyceraldehyde 3-phosphate: step 3/5. Functionally, catalyzes the interconversion of 2-phosphoglycerate and 3-phosphoglycerate. The protein is 2,3-bisphosphoglycerate-independent phosphoglycerate mutase of Gluconobacter oxydans (strain 621H) (Gluconobacter suboxydans).